The primary structure comprises 372 residues: NAD(P)H-quinone oxidoreductase subunit 1 (372 aa).

The next 8 membrane-spanning stretches (helical) occupy residues 29-49, 97-117, 130-150, 176-196, 204-224, 254-274, 308-328, and 347-367; these read WIPF…LVVV, WLFT…YLIV, VGIF…LMAG, LALS…IDIV, ILGW…IAAL, FALF…VFAI, SLGI…AVLM, and FLLP…LAFP.

This sequence belongs to the complex I subunit 1 family. As to quaternary structure, NDH-1 is composed of at least 11 different subunits.

Its subcellular location is the cellular thylakoid membrane. The catalysed reaction is a plastoquinone + NADH + (n+1) H(+)(in) = a plastoquinol + NAD(+) + n H(+)(out). The enzyme catalyses a plastoquinone + NADPH + (n+1) H(+)(in) = a plastoquinol + NADP(+) + n H(+)(out). Functionally, NDH-1 shuttles electrons from an unknown electron donor, via FMN and iron-sulfur (Fe-S) centers, to quinones in the respiratory and/or the photosynthetic chain. The immediate electron acceptor for the enzyme in this species is believed to be plastoquinone. Couples the redox reaction to proton translocation, and thus conserves the redox energy in a proton gradient. This chain is NAD(P)H-quinone oxidoreductase subunit 1, found in Crocosphaera subtropica (strain ATCC 51142 / BH68) (Cyanothece sp. (strain ATCC 51142)).